The following is a 361-amino-acid chain: Phosphoribosylformylglycinamidine cyclo-ligase (361 aa).

It belongs to the AIR synthase family.

It is found in the cytoplasm. The catalysed reaction is 2-formamido-N(1)-(5-O-phospho-beta-D-ribosyl)acetamidine + ATP = 5-amino-1-(5-phospho-beta-D-ribosyl)imidazole + ADP + phosphate + H(+). It participates in purine metabolism; IMP biosynthesis via de novo pathway; 5-amino-1-(5-phospho-D-ribosyl)imidazole from N(2)-formyl-N(1)-(5-phospho-D-ribosyl)glycinamide: step 2/2. This chain is Phosphoribosylformylglycinamidine cyclo-ligase, found in Bartonella henselae (strain ATCC 49882 / DSM 28221 / CCUG 30454 / Houston 1) (Rochalimaea henselae).